Reading from the N-terminus, the 73-residue chain is Small, acid-soluble spore protein C5 (73 aa).

This sequence belongs to the alpha/beta-type SASP family.

In terms of biological role, SASP are bound to spore DNA. They are double-stranded DNA-binding proteins that cause DNA to change to an a-like conformation. They protect the DNA backbone from chemical and enzymatic cleavage and are thus involved in dormant spore's high resistance to UV light. The chain is Small, acid-soluble spore protein C5 (SASP-C5) from Priestia megaterium (Bacillus megaterium).